The chain runs to 202 residues: Imidazoleglycerol-phosphate dehydratase (202 aa).

Belongs to the imidazoleglycerol-phosphate dehydratase family.

It is found in the cytoplasm. The enzyme catalyses D-erythro-1-(imidazol-4-yl)glycerol 3-phosphate = 3-(imidazol-4-yl)-2-oxopropyl phosphate + H2O. It participates in amino-acid biosynthesis; L-histidine biosynthesis; L-histidine from 5-phospho-alpha-D-ribose 1-diphosphate: step 6/9. This Sinorhizobium medicae (strain WSM419) (Ensifer medicae) protein is Imidazoleglycerol-phosphate dehydratase.